Consider the following 442-residue polypeptide: MADICYEDETSACESRPLWSSRKWRIGVQRFRMSPSEMNPTASTTEEEDKSEGIYNKRNKQEEYDFMNCASSSPSQSSPEEESVSLEDSDVSISDGNSSVNDVAVIPSKKTVKETDLRPRYGVASVCGRRRDMEDAVALHPSFVRKQTEFSRTRWHYFGVYDGHGCSHVAARCKERLHELVQEEALSDKKEEWKKMMERSFTRMDKEVVRWGETVMSANCRCELQTPDCDAVGSTAVVSVITPEKIIVANCGDSRAVLCRNGKAVPLSTDHKPDRPDELDRIQEAGGRVIYWDGARVLGVLAMSRAIGDNYLKPYVTSEPEVTVTDRTEEDEFLILATDGLWDVVTNEAACTMVRMCLNRKSGRGRRRGETQTPGRRSEEEGKEEEEKVVGSRKNGKRGEITDKACTEASVLLTKLALAKHSSDNVSVVVIDLRRRRKRHVA.

The disordered stretch occupies residues Arg30 to Val100. The segment covering Pro79–Asp90 has biased composition (acidic residues). The PPM-type phosphatase domain maps to Arg120–Leu433. Mn(2+) contacts are provided by Asp162, Gly163, and Asp339. Residues Gly363–Ile401 are disordered. The span at Arg376 to Val390 shows a compositional bias: basic and acidic residues. Asp424 lines the Mn(2+) pocket.

This sequence belongs to the PP2C family. In terms of assembly, part of a K(+)-channel calcium-sensing kinase/phosphatase complex composed by a calcium sensor CBL (CBL1, CBL2, CBL3 or CBL9), a kinase CIPK (CIPK6, CIPK16 or CIPK23), a phosphatase PP2C (AIP1) and a K(+)-channel (AKT1). Interacts with AKT1 and CIPK23. Interacts with PYL8/RCAR3 in an abscisic acid-independent. Interacts with PYR1/RCAR11 in an abscisic acid-dependent manner. The cofactor is Mg(2+). It depends on Mn(2+) as a cofactor. As to expression, expressed in shoot meristem, vascular tissues of cotyledons, and in primary roots surrounding the root meristem. Highly expressed in seeds.

Its subcellular location is the cell membrane. It is found in the cytoplasm. It localises to the nucleus. It catalyses the reaction O-phospho-L-seryl-[protein] + H2O = L-seryl-[protein] + phosphate. The catalysed reaction is O-phospho-L-threonyl-[protein] + H2O = L-threonyl-[protein] + phosphate. Its function is as follows. Involved in the negative regulation of the K(+) potassium channel AKT1 by its dephosphorylation, antagonistically to CIPK proteins (e.g. CIPK23). Functions as a positive regulator of abscisic acid-mediated cell signaling during seedling growth. Involved in the regulation of seed dormancy. Acts as a negative regulator of seed dormancy by inhibiting abscisic signaling and subsequently activating gibberellic acid signaling. This chain is Protein phosphatase 2C 3, found in Arabidopsis thaliana (Mouse-ear cress).